Consider the following 1357-residue polypeptide: Regulator of V-ATPase in vacuolar membrane protein 1 (1357 aa).

8 WD repeats span residues 98 to 134, 142 to 182, 190 to 239, 384 to 423, 431 to 470, 595 to 636, 638 to 679, and 898 to 939; these read HDDT…GVYQ, KQPK…GEQA, PHPK…KNHT, GHNK…HGVS, QTES…KEDS, INTG…LEYE, TFHN…YTNN, and QKSI…RIAY. A disordered region spans residues 1243-1357; sequence GSPSASDIES…ITKNLLDDFV (115 aa). Serine 1244 and serine 1248 each carry phosphoserine. The span at 1272 to 1288 shows a compositional bias: low complexity; sequence STSSNSLAQSSSSAPRS. The span at 1320 to 1332 shows a compositional bias: basic and acidic residues; that stretch reads SENRKDKLSKDIL.

Component of the RAVE complex composed of RAV1, RAV2 and CBF3D/SKP1. Within the complex, it interacts directly with RAV2 and CBF3D. Interacts with the V-ATPase V1 subunits VMA1, VMA2 and VMA8.

It localises to the endomembrane system. Component of the RAVE complex, which is required for stable assembly of the vacuolar ATPase complex V-ATPase under many conditions. Required for transport between the early endosome and the late endosome/prevacuolar compartment (PVC), suggesting that assembly of vacuolar ATPase at the early endosome is required for transport from the early endosome to the PVC. The sequence is that of Regulator of V-ATPase in vacuolar membrane protein 1 (RAV1) from Saccharomyces cerevisiae (strain ATCC 204508 / S288c) (Baker's yeast).